The sequence spans 458 residues: Retinoic acid receptor RXR-beta (458 aa).

Basic and acidic residues predominate over residues 1–17 (GEAGRDGMGDTGRDSRS). The disordered stretch occupies residues 1–105 (GEAGRDGMGD…GGSGPPEDVK (105 aa)). A modulating region spans residues 1–129 (GEAGRDGMGD…PGGPGAGKRL (129 aa)). The segment covering 18–31 (PDSSSPNPLSQGIP) has biased composition (low complexity). A compositionally biased stretch (pro residues) spans 32–56 (PSSPPGPPHTPSAPPPPMPPPPLGS). Over residues 57-68 (PFPVISSSMGSP) the composition is skewed to low complexity. The segment covering 69 to 78 (GLPPPAPPGF) has biased composition (pro residues). 2 consecutive NR C4-type zinc fingers follow at residues 130 to 150 (CAIC…CEGC) and 166 to 190 (CRDN…YQKC). The segment at residues 130–195 (CAICGDRSSG…RYQKCLATGM (66 aa)) is a DNA-binding region (nuclear receptor). The tract at residues 196–220 (KREAVQEERQRGKDKDGDGDGAGGA) is hinge. The segment covering 201 to 213 (QEERQRGKDKDGD) has biased composition (basic and acidic residues). Disordered stretches follow at residues 201-223 (QEER…APEE) and 238-261 (QKSD…NDPV). Positions 221–454 (PEEMPVDRIL…TFLMEMLEAP (234 aa)) constitute an NR LBD domain. A compositionally biased stretch (gly residues) spans 245 to 255 (EGPGATGGGGS).

This sequence belongs to the nuclear hormone receptor family. NR2 subfamily. In terms of assembly, homodimer (in vitro). Heterodimer with other retinoic acid receptor family members. Binds DNA preferentially as a RAR/RXR heterodimer. Interacts with NR1H3. Interacts with AKAP13. As to expression, expressed in the adrenal gland with main expression in the zona fasciculata (at protein level).

It localises to the nucleus. Its subcellular location is the cytoplasm. Its function is as follows. Receptor for retinoic acid. Retinoic acid receptors bind as heterodimers to their target response elements in response to their ligands, all-trans or 9-cis retinoic acid, and regulate gene expression in various biological processes. The RAR/RXR heterodimers bind to the retinoic acid response elements (RARE). The sequence is that of Retinoic acid receptor RXR-beta (Rxrb) from Rattus norvegicus (Rat).